The following is a 42-amino-acid chain: Crotamine-IV-3 (42 aa).

3 cysteine pairs are disulfide-bonded: C4-C37, C11-C31, and C19-C38.

Belongs to the crotamine-myotoxin family. Monomer. As to expression, expressed by the venom gland.

Its subcellular location is the secreted. Cationic peptide that possesses multiple functions. It acts as a cell-penetrating peptide (CPP), and as a potent voltage-gated potassium channel (Kv) inhibitor. It exhibits antimicrobial activities, and hind limb paralysis. It also induces potent blockade of neuromuscular transmission in young chicken biventer cervicis preparation and potent myotoxic effect. In mice, it induces myonecrosis, upon intramuscular or subcutaneous injections. This chain is Crotamine-IV-3, found in Crotalus durissus cumanensis (South American rattlesnake).